Consider the following 156-residue polypeptide: SsrA-binding protein (156 aa).

This sequence belongs to the SmpB family.

It is found in the cytoplasm. Required for rescue of stalled ribosomes mediated by trans-translation. Binds to transfer-messenger RNA (tmRNA), required for stable association of tmRNA with ribosomes. tmRNA and SmpB together mimic tRNA shape, replacing the anticodon stem-loop with SmpB. tmRNA is encoded by the ssrA gene; the 2 termini fold to resemble tRNA(Ala) and it encodes a 'tag peptide', a short internal open reading frame. During trans-translation Ala-aminoacylated tmRNA acts like a tRNA, entering the A-site of stalled ribosomes, displacing the stalled mRNA. The ribosome then switches to translate the ORF on the tmRNA; the nascent peptide is terminated with the 'tag peptide' encoded by the tmRNA and targeted for degradation. The ribosome is freed to recommence translation, which seems to be the essential function of trans-translation. This is SsrA-binding protein from Paracoccus denitrificans (strain Pd 1222).